The following is a 2059-amino-acid chain: Non-reducing polyketide synthase stmB (2059 aa).

In terms of domain architecture, Starter acyltransferase (SAT) spans 7 to 243 (LLFGDQTVEL…LKLAAYGAVH (237 aa)). The Ketosynthase family 3 (KS3) domain maps to 366-796 (SNSIAIVGMA…GGNSCLILEE (431 aa)). Residues cysteine 538, histidine 673, and histidine 713 each act as for beta-ketoacyl synthase activity in the active site. The Malonyl-CoA:ACP transacylase (MAT) domain occupies 895–1185 (WVFSGQGSQY…CGSMVKATLG (291 aa)). The segment at 1273-1413 (LHFVKKETVT…SASEWTDEWS (141 aa)) is N-terminal hotdog fold. A PKS/mFAS DH domain is found at 1273–1581 (LHFVKKETVT…FQRMPRMVLH (309 aa)). The active-site Proton acceptor; for dehydratase activity is histidine 1306. Residues 1435-1581 (GDHLRRPVVY…FQRMPRMVLH (147 aa)) form a C-terminal hotdog fold region. Aspartate 1495 functions as the Proton donor; for dehydratase activity in the catalytic mechanism. The Carrier domain occupies 1619–1696 (PPKHDLADQL…DARRALGGDE (78 aa)). Serine 1656 is subject to O-(pantetheine 4'-phosphoryl)serine. Residues 1693 to 1727 (GGDETASESENDAEGDAPSDGGSPSGSWTPISPPE) are disordered. The span at 1697–1709 (TASESENDAEGDA) shows a compositional bias: acidic residues. A compositionally biased stretch (low complexity) spans 1710–1719 (PSDGGSPSGS). The interval 1778–2059 (AVEYKSNVVL…LGKLLQEAVA (282 aa)) is thioesterase (TE) domain.

It depends on pantetheine 4'-phosphate as a cofactor.

Its pathway is mycotoxin biosynthesis. Functionally, non-reducing polyketide synthase; part of the gene cluster that mediates the biosynthesis of stromemycin, a depside C-glucoside with two unsaturated C9 side chains belonging to aromatic polyketide glycosides. The HR-PKS stmA and the NR-PKS stmB act as scaffold-generating enzymes responsible for the biosynthesis of the polyketide skeleton bininalkenylresorcylic acid. StmA condenses on acetyl-CoA starter unit with 4 malonyl-CoA units and the stmB uses 3 more malonyl-CoA units and catalyzes the depside bond formation. The glycoytransferase stmC then acts as the tailoring enzyme responsible for 3-C-glucosylation of bininalkenylresorcylic acid to yield stromemycin. The sequence is that of Non-reducing polyketide synthase stmB from Aspergillus ustus.